We begin with the raw amino-acid sequence, 112 residues long: Putative pterin-4-alpha-carbinolamine dehydratase (112 aa).

The protein belongs to the pterin-4-alpha-carbinolamine dehydratase family.

The catalysed reaction is (4aS,6R)-4a-hydroxy-L-erythro-5,6,7,8-tetrahydrobiopterin = (6R)-L-erythro-6,7-dihydrobiopterin + H2O. In Shewanella sp. (strain MR-7), this protein is Putative pterin-4-alpha-carbinolamine dehydratase.